A 1123-amino-acid polypeptide reads, in one-letter code: Phytochrome A (1123 aa).

Over residues 1–14 (MSSSRPSQSSTTSS) the composition is skewed to low complexity. A disordered region spans residues 1–20 (MSSSRPSQSSTTSSRSKHSA). The GAF domain maps to 218 to 401 (SMERLCDTMV…VFAILVNKEL (184 aa)). Cys323 is a phytochromobilin binding site. Positions 617–687 (VTAEMVRLIE…KMLELALQGQ (71 aa)) constitute a PAS 1 domain. Residues 690-746 (RNVEFEIKTHGPSRDSSPISLIVNACASKDVRDSVVGVCFIAQDITGQKSIMDKFTR) form the PAC domain. A PAS 2 domain is found at 747-821 (IEGDYRAIIQ…KNQEAFVNFG (75 aa)). Positions 901–1118 (YIRRQIRNPL…TFIISVELAV (218 aa)) constitute a Histidine kinase domain.

It belongs to the phytochrome family. In terms of assembly, homodimer. Post-translationally, contains one covalently linked phytochromobilin chromophore.

Regulatory photoreceptor which exists in two forms that are reversibly interconvertible by light: the Pr form that absorbs maximally in the red region of the spectrum and the Pfr form that absorbs maximally in the far-red region. Photoconversion of Pr to Pfr induces an array of morphogenic responses, whereas reconversion of Pfr to Pr cancels the induction of those responses. Pfr controls the expression of a number of nuclear genes including those encoding the small subunit of ribulose-bisphosphate carboxylase, chlorophyll A/B binding protein, protochlorophyllide reductase, rRNA, etc. It also controls the expression of its own gene(s) in a negative feedback fashion. The sequence is that of Phytochrome A (PHYA) from Solanum tuberosum (Potato).